Here is a 219-residue protein sequence, read N- to C-terminus: Large ribosomal subunit protein uL16y (219 aa).

The protein belongs to the universal ribosomal protein uL16 family. In terms of assembly, component of the small ribosomal subunit. Mature ribosomes consist of a small (40S) and a large (60S) subunit. The 40S subunit contains about 33 different proteins and 1 molecule of RNA (18S). The 60S subunit contains about 49 different proteins and 3 molecules of RNA (25S, 5.8S and 5S).

This chain is Large ribosomal subunit protein uL16y (SG12), found in Oryza sativa subsp. japonica (Rice).